The chain runs to 204 residues: 3-isopropylmalate dehydratase small subunit (204 aa).

The protein belongs to the LeuD family. LeuD type 1 subfamily. As to quaternary structure, heterodimer of LeuC and LeuD.

The enzyme catalyses (2R,3S)-3-isopropylmalate = (2S)-2-isopropylmalate. The protein operates within amino-acid biosynthesis; L-leucine biosynthesis; L-leucine from 3-methyl-2-oxobutanoate: step 2/4. Functionally, catalyzes the isomerization between 2-isopropylmalate and 3-isopropylmalate, via the formation of 2-isopropylmaleate. The polypeptide is 3-isopropylmalate dehydratase small subunit (Vesicomyosocius okutanii subsp. Calyptogena okutanii (strain HA)).